Here is a 549-residue protein sequence, read N- to C-terminus: Ceramide kinase 1 (549 aa).

The region spanning 162-316 (NRPKNIIIFI…VDVCTVHQHQ (155 aa)) is the DAGKc domain. ATP is bound by residues 172–174 (NPF) and 205–209 (TERAN). 233 to 236 (GGDG) provides a ligand contact to substrate. D235 acts as the Proton donor/acceptor in catalysis. ATP is bound by residues E240, 277–279 (GSA), R342, R348, and 500–502 (DGE).

It catalyses the reaction an N-acylsphing-4-enine + ATP = an N-acylsphing-4-enine 1-phosphate + ADP + H(+). The catalysed reaction is an N-acyl-15-methylhexadecasphing-4-enine + ATP = an N-acyl-15-methylhexadecasphing-4-enine-1-phosphate + ADP + H(+). It participates in lipid metabolism; sphingolipid metabolism. Functionally, catalyzes the phosphorylation of ceramide to form ceramide 1-phosphate. C.elegans contain specific sphingoid bases, which are unique or different in structure compared to the sphingoid bases found in other animals. Two examples of these distinctive compounds are: 15-methylhexadecasphinganine and 15-methylhexadecasphing-4-enine. The polypeptide is Ceramide kinase 1 (Caenorhabditis elegans).